The chain runs to 710 residues: MFNKVTKTFQYGQHTVTLETGEIARQASGAVLVSIEDTVVLATVVARKDAKPGQDFFPLTVDYVEKTYAAGRIPGGFFKREGRPSEKETLTSRLIDRPIRPLFPEGYLNEVQIIIHVMSVNPEIDPDIAAMIGASAALSVSGIPFAGPLGAARVGYIDGQYILNPTATQLKTSQMDLVVAGTEAAVLMVESEAQQLSEEVMLGAVVFGHDQMKAVIDAIHDLVRDGGKPEVQWAPPAKNEALIARVAHFAEEKLRAAYQTKDKQARTAKLKDAFAEVNAEVAAEATSVGGAAPDTSEVGNILFDLEAKIVRSQILDGEPRIDGRDTRTVRPITIRTGVLPRTHGSALFTRGETQALVIATLGTARDEQKIDALMGEYSDRFMLHYNMPPFATGETGRVGTPKRREIGHGRLAKRALIAALPAPEDFSYSVRLVSEITESNGSSSMASVCGGCLALMDAGVPMQAHVAGIAMGLIKDGGKFAVLSDILGDEDHLGDMDFKVAGTANGITALQMDIKIQGITKEIMQVALAQAKEGRIHILGEMEKAVPSGTTGELSDFAPRLITIKINPEKIRDVIGKGGAVIRALTEETGTQIDISDEGVVTIASVDAAAGQEAKRRIEELTASVEVGKVYEGTVLKLLDFGAIVQVMPGKDGLLHISQIANERVNAVADYLKEGQQVRVKVLETDDRGRLKLSMKAALAEDNPEAAPQE.

Positions 491 and 497 each coordinate Mg(2+). The KH domain occupies 559–618; sequence PRLITIKINPEKIRDVIGKGGAVIRALTEETGTQIDISDEGVVTIASVDAAAGQEAKRRI. Residues 628 to 696 enclose the S1 motif domain; that stretch reads GKVYEGTVLK…DRGRLKLSMK (69 aa).

It belongs to the polyribonucleotide nucleotidyltransferase family. Requires Mg(2+) as cofactor.

The protein resides in the cytoplasm. The enzyme catalyses RNA(n+1) + phosphate = RNA(n) + a ribonucleoside 5'-diphosphate. Its function is as follows. Involved in mRNA degradation. Catalyzes the phosphorolysis of single-stranded polyribonucleotides processively in the 3'- to 5'-direction. The protein is Polyribonucleotide nucleotidyltransferase of Herminiimonas arsenicoxydans.